The following is a 335-amino-acid chain: Methionine import ATP-binding protein MetN (335 aa).

The ABC transporter domain occupies 2–241; that stretch reads IEFQRLHKSY…PKHVTTRRFV (240 aa). 38–45 provides a ligand contact to ATP; the sequence is GHSGAGKS.

Belongs to the ABC transporter superfamily. Methionine importer (TC 3.A.1.24) family. In terms of assembly, the complex is composed of two ATP-binding proteins (MetN), two transmembrane proteins (MetI) and a solute-binding protein (MetQ).

It localises to the cell inner membrane. It catalyses the reaction L-methionine(out) + ATP + H2O = L-methionine(in) + ADP + phosphate + H(+). The catalysed reaction is D-methionine(out) + ATP + H2O = D-methionine(in) + ADP + phosphate + H(+). In terms of biological role, part of the ABC transporter complex MetNIQ involved in methionine import. Responsible for energy coupling to the transport system. In Xanthomonas oryzae pv. oryzae (strain MAFF 311018), this protein is Methionine import ATP-binding protein MetN.